Reading from the N-terminus, the 421-residue chain is UDP-N-acetylglucosamine 1-carboxyvinyltransferase (421 aa).

A phosphoenolpyruvate-binding site is contributed by K22–N23. R91 contacts UDP-N-acetyl-alpha-D-glucosamine. Catalysis depends on C115, which acts as the Proton donor. 2-(S-cysteinyl)pyruvic acid O-phosphothioketal is present on C115. Residues R120–L124, D306, and I328 each bind UDP-N-acetyl-alpha-D-glucosamine.

It belongs to the EPSP synthase family. MurA subfamily.

It is found in the cytoplasm. It catalyses the reaction phosphoenolpyruvate + UDP-N-acetyl-alpha-D-glucosamine = UDP-N-acetyl-3-O-(1-carboxyvinyl)-alpha-D-glucosamine + phosphate. Its pathway is cell wall biogenesis; peptidoglycan biosynthesis. Its function is as follows. Cell wall formation. Adds enolpyruvyl to UDP-N-acetylglucosamine. This is UDP-N-acetylglucosamine 1-carboxyvinyltransferase from Methylacidiphilum infernorum (isolate V4) (Methylokorus infernorum (strain V4)).